A 318-amino-acid chain; its full sequence is Porphobilinogen deaminase (318 aa).

Residue C241 is modified to S-(dipyrrolylmethanemethyl)cysteine.

It belongs to the HMBS family. As to quaternary structure, monomer. Requires dipyrromethane as cofactor.

It carries out the reaction 4 porphobilinogen + H2O = hydroxymethylbilane + 4 NH4(+). The protein operates within porphyrin-containing compound metabolism; protoporphyrin-IX biosynthesis; coproporphyrinogen-III from 5-aminolevulinate: step 2/4. Tetrapolymerization of the monopyrrole PBG into the hydroxymethylbilane pre-uroporphyrinogen in several discrete steps. The chain is Porphobilinogen deaminase from Geobacter metallireducens (strain ATCC 53774 / DSM 7210 / GS-15).